A 284-amino-acid polypeptide reads, in one-letter code: MKVFILALLALAATTAIAQLETTCSQGFGQSQQQQQPGQRQLLEQMKPCVAFLQQKCGPLRMPFLQTQVEQLSSCQIVQYQCCQQLAQIPERTRCHAIHIVVEAIIQQQSQQQWQEPQQQAQHKSMRMLLENLSLMCNIYVPVQCQQQQQLGQQQQQQLQEQLTPCTTFLQQQCSPVTVPFPQIPVDQPTSCQNVQHQCCRQLSQIPEQFRCQAIHNVAEAIRQQQPQQQWQGMYQPQQPAQLESIRMSLQALRSMCSIYIPVQCPAPTTYNIPLVATYTGGAC.

Positions 1 to 18 (MKVFILALLALAATTAIA) are cleaved as a signal peptide.

The protein belongs to the prolamin family. Post-translationally, contains disulfide bonds.

Functionally, seed storage protein. Might be integrated via inter-chain disulfide bonds within the glutenin polymer. The protein is Avenin-like b8 of Triticum aestivum (Wheat).